Reading from the N-terminus, the 115-residue chain is Large ribosomal subunit protein bL20 (115 aa).

Belongs to the bacterial ribosomal protein bL20 family.

Functionally, binds directly to 23S ribosomal RNA and is necessary for the in vitro assembly process of the 50S ribosomal subunit. It is not involved in the protein synthesizing functions of that subunit. The polypeptide is Large ribosomal subunit protein bL20 (Chlorobium limicola (strain DSM 245 / NBRC 103803 / 6330)).